The chain runs to 398 residues: Metal tolerance protein 1 (398 aa).

Residues 1-56 (MESSSPHHSHIVEVNVGKSDEERIIVASKVCGEAPCGFSDSKNASGDAHERSASMR) are Cytoplasmic-facing. A helical transmembrane segment spans residues 57–77 (KLCIAVVLCLVFMSVEVVGGI). At 78 to 89 (KANSLAILTDAA) the chain is on the vacuolar side. The helical transmembrane segment at 90-110 (HLLSDVAAFAISLFSLWAAGW) threads the bilayer. Over 111–122 (EATPRQTYGFFR) the chain is Cytoplasmic. The helical transmembrane segment at 123–143 (IEILGALVSIQLIWLLTGILV) threads the bilayer. The Vacuolar portion of the chain corresponds to 144–159 (YEAIIRIVTETSEVNG). The helical transmembrane segment at 160–180 (FLMFLVAAFGLVVNIIMAVLL) threads the bilayer. Topologically, residues 181 to 263 (GHDHGHSHGH…KRNINLQGAY (83 aa)) are cytoplasmic. The tract at residues 182-232 (HDHGHSHGHGHGHGHDHHNHSHGVTVTTHHHHHDHEHGHSHGHGEDKHHAH) is required for zinc-binding. The disordered stretch occupies residues 186–232 (HSHGHGHGHGHDHHNHSHGVTVTTHHHHHDHEHGHSHGHGEDKHHAH). The segment covering 187 to 202 (SHGHGHGHGHDHHNHS) has biased composition (basic residues). Basic and acidic residues predominate over residues 216-232 (HEHGHSHGHGEDKHHAH). The chain crosses the membrane as a helical span at residues 264–284 (LHVLGDSIQSVGVMIGGAIIW). Residues 285–290 (YNPEWK) are Vacuolar-facing. A helical membrane pass occupies residues 291-311 (IVDLICTLAFSVIVLGTTINM). The Cytoplasmic portion of the chain corresponds to 312-398 (IRNILEVLME…ISHVTIQIER (87 aa)).

The protein belongs to the cation diffusion facilitator (CDF) transporter (TC 2.A.4) family. SLC30A subfamily. In terms of tissue distribution, ubiquitously expressed at low levels.

Its subcellular location is the vacuole membrane. In terms of biological role, mediates zinc accumulation in roots and confers resistance to zinc. Involved in sequestration of excess zinc in the cytoplasm into vacuoles to maintain zinc homeostasis. Can also transport cadmium with a low efficiency. The protein is Metal tolerance protein 1 of Arabidopsis thaliana (Mouse-ear cress).